A 523-amino-acid polypeptide reads, in one-letter code: Nuclear receptor ROR-alpha (523 aa).

Residues 1 to 26 are compositionally biased toward low complexity; sequence MESAPAAPDPAASEPGSSGSEAAAGS. A disordered region spans residues 1-63; it reads MESAPAAPDP…SRGISVTKKT (63 aa). An N6-methyllysine modification is found at Lys38. 2 consecutive NR C4-type zinc fingers follow at residues 73 to 93 and 109 to 133; these read CKIC…CEGC and CPRQ…LQKC. Residues 73 to 138 constitute a DNA-binding region (nuclear receptor); the sequence is CKICGDKSSG…RLQKCLAVGM (66 aa). Residues 154–183 are disordered; that stretch reads DSLYAEVQKHRMQQQQRDHQQQPGEAEPLT. At Thr183 the chain carries Phosphothreonine; by MAPK1. A Glycyl lysine isopeptide (Lys-Gly) (interchain with G-Cter in SUMO) cross-link involves residue Lys240. One can recognise an NR LBD domain in the interval 272–510; sequence ELEHLAQNIS…LHFPPLYKEL (239 aa). Positions 506 to 511 match the AF-2 motif; sequence LYKELF.

Belongs to the nuclear hormone receptor family. NR1 subfamily. As to quaternary structure, monomer. Interacts (via the DNA-binding domain) with HIF1A; the interaction enhances HIF1A transcription under hypoxia through increasing protein stability. Interacts with CEBPB; the interaction disrupts the interaction CEBPB:EP300. Interacts with the coactivators NCOA2, PPARGC1A (via LXXLL motif), EP300 and MED1. Interacts with the corepressor NCOR1. Interacts with MAGED1 and CTNNB1. Interacts with CRY1 and PER2. Interacts (via AF-2 motif) with PROX1. Interacts with NRIP1. Isoform 4 interacts (via AF-2 motif) with isoform 1 of FOXP3 (via LXXLL motif). Phosphorylation by conventional PKCs in neurons inhibits transcriptional activity. Phosphorylated on Thr-183 by MAPK1/ERK1 in vitro. Post-translationally, sumoylated by SENP1 and SENP2. Sumoylation, promoted by PIAS2, PIAS3, PIAS4 but not PIAS1, enhances the transcriptional activity. Desumoylated by SENP1. In terms of processing, ubiquitinated, leading to its degradation by the proteasome. Proteasomal degradation is required for efficient transcriptional activity and is prevented by HR. Monomethylated at Lys-38 by EZH2, this creates a degron recognized by a DCX (DDB1-DCAF1/VPRBP-CUL4A-RBX1) E3 ubiquitin ligase complex. As to expression, expressed in cerebellum, heart, liver, lung, kidney, retina and brown and white adipose tissues. Expressed in the subset of mature Th17 cells.

It is found in the nucleus. Its function is as follows. Nuclear receptor that binds DNA as a monomer to ROR response elements (RORE) containing a single core motif half-site 5'-AGGTCA-3' preceded by a short A-T-rich sequence. Key regulator of embryonic development, cellular differentiation, immunity, circadian rhythm as well as lipid, steroid, xenobiotics and glucose metabolism. Considered to have intrinsic transcriptional activity, have some natural ligands like oxysterols that act as agonists (25-hydroxycholesterol) or inverse agonists (7-oxygenated sterols), enhancing or repressing the transcriptional activity, respectively. Recruits distinct combinations of cofactors to target genes regulatory regions to modulate their transcriptional expression, depending on the tissue, time and promoter contexts. Regulates genes involved in photoreceptor development including OPN1SW, OPN1SM and ARR3 and skeletal muscle development with MYOD1. Required for proper cerebellum development, regulates SHH gene expression, among others, to induce granule cells proliferation as well as expression of genes involved in calcium-mediated signal transduction. Regulates the circadian expression of several clock genes, including CLOCK, BMAL1, NPAS2 and CRY1. Competes with NR1D1 for binding to their shared DNA response element on some clock genes such as BMAL1, CRY1 and NR1D1 itself, resulting in NR1D1-mediated repression or RORA-mediated activation of clock genes expression, leading to the circadian pattern of clock genes expression. Therefore influences the period length and stability of the clock. Regulates genes involved in lipid metabolism such as apolipoproteins APOA1, APOA5, APOC3 and PPARG. In liver, has specific and redundant functions with RORC as positive or negative modulator of expression of genes encoding phase I and phase II proteins involved in the metabolism of lipids, steroids and xenobiotics, such as CYP7B1 and SULT2A1. Induces a rhythmic expression of some of these genes. In addition, interplays functionally with NR1H2 and NR1H3 for the regulation of genes involved in cholesterol metabolism. Also involved in the regulation of hepatic glucose metabolism through the modulation of G6PC1 and PCK1. In adipose tissue, plays a role as negative regulator of adipocyte differentiation, probably acting through dual mechanisms. May suppress CEBPB-dependent adipogenesis through direct interaction and PPARG-dependent adipogenesis through competition for DNA-binding. Downstream of IL6 and TGFB and synergistically with RORC isoform 2, is implicated in the lineage specification of uncommitted CD4(+) T-helper (T(H)) cells into T(H)17 cells, antagonizing the T(H)1 program. Probably regulates IL17 and IL17F expression on T(H) by binding to the essential enhancer conserved non-coding sequence 2 (CNS2) in the IL17-IL17F locus. Involved in hypoxia signaling by interacting with and activating the transcriptional activity of HIF1A. May inhibit cell growth in response to cellular stress. May exert an anti-inflammatory role by inducing CHUK expression and inhibiting NF-kappa-B signaling. This chain is Nuclear receptor ROR-alpha (Rora), found in Mus musculus (Mouse).